A 291-amino-acid chain; its full sequence is Small ribosomal subunit protein uS2 (291 aa).

The segment at 255 to 291 is disordered; it reads AGAATGEWSEAQGAQWETGTGAPAADWAAEPAKESSW.

Belongs to the universal ribosomal protein uS2 family. In terms of assembly, component of the small ribosomal subunit. Mature ribosomes consist of a small (40S) and a large (60S) subunit. The 40S subunit contains about 33 different proteins and 1 molecule of RNA (18S). The 60S subunit contains about 49 different proteins and 3 molecules of RNA (25S, 5.8S and 5S). Interacts with RPS21.

The protein localises to the cytoplasm. Required for the assembly and/or stability of the 40S ribosomal subunit. Required for the processing of the 20S rRNA-precursor to mature 18S rRNA in a late step of the maturation of 40S ribosomal subunits. In Podospora anserina (strain S / ATCC MYA-4624 / DSM 980 / FGSC 10383) (Pleurage anserina), this protein is Small ribosomal subunit protein uS2.